The chain runs to 172 residues: Adenine phosphoribosyltransferase (172 aa).

The protein belongs to the purine/pyrimidine phosphoribosyltransferase family. In terms of assembly, homodimer.

It is found in the cytoplasm. It catalyses the reaction AMP + diphosphate = 5-phospho-alpha-D-ribose 1-diphosphate + adenine. It functions in the pathway purine metabolism; AMP biosynthesis via salvage pathway; AMP from adenine: step 1/1. Catalyzes a salvage reaction resulting in the formation of AMP, that is energically less costly than de novo synthesis. This Clostridium acetobutylicum (strain ATCC 824 / DSM 792 / JCM 1419 / IAM 19013 / LMG 5710 / NBRC 13948 / NRRL B-527 / VKM B-1787 / 2291 / W) protein is Adenine phosphoribosyltransferase.